Consider the following 157-residue polypeptide: ATP synthase subunit b (157 aa).

A helical transmembrane segment spans residues 7–27; that stretch reads LIAQLVVFFILAWFTMKFVWP.

The protein belongs to the ATPase B chain family. F-type ATPases have 2 components, F(1) - the catalytic core - and F(0) - the membrane proton channel. F(1) has five subunits: alpha(3), beta(3), gamma(1), delta(1), epsilon(1). F(0) has three main subunits: a(1), b(2) and c(10-14). The alpha and beta chains form an alternating ring which encloses part of the gamma chain. F(1) is attached to F(0) by a central stalk formed by the gamma and epsilon chains, while a peripheral stalk is formed by the delta and b chains.

Its subcellular location is the cell inner membrane. Functionally, f(1)F(0) ATP synthase produces ATP from ADP in the presence of a proton or sodium gradient. F-type ATPases consist of two structural domains, F(1) containing the extramembraneous catalytic core and F(0) containing the membrane proton channel, linked together by a central stalk and a peripheral stalk. During catalysis, ATP synthesis in the catalytic domain of F(1) is coupled via a rotary mechanism of the central stalk subunits to proton translocation. Component of the F(0) channel, it forms part of the peripheral stalk, linking F(1) to F(0). In Azoarcus sp. (strain BH72), this protein is ATP synthase subunit b.